Consider the following 424-residue polypeptide: MRDSSTTASTKSSPLWKPFASNCCSVDDQTVFGNLSRCRPSRSEFSKNHLGPLPSFRRLSFADLSRSSSARINEDLAQTLGADLVDFQMCELKMITQSFSGNYLLGEGGFGKVYKGYVDDYLRQSLKAQPVAVKLLDIEGLQGHREWLSEVIFLGQLKHPNLVKLIGYCCEEEERVLIYEFMPRGSLENHLFRRISLSLPWATRLKIAVAAAKGLAFLHDLESPIIYRDFKTSNILLDSDFTAKLSDFGLAKMGPEGSKSHVTTRVMGTYGYAAPEYVSTGHLTTKSDVYSYGVVLLELLTGRRATEKSRPKNQQNIIDWSKPYLTSSRRLRCVMDPRLAGQYSVKAAKDTALLALQCVSPNPKDRPKMLAVVEALESLIHYKDMAVSSGHWPLSPKSQGGKVSPKVRGDHRSGRKSAPGSLRS.

The Protein kinase domain occupies 99 to 380 (FSGNYLLGEG…AVVEALESLI (282 aa)). Residues 105–113 (LGEGGFGKV) and Lys-134 each bind ATP. The residue at position 179 (Tyr-179) is a Phosphotyrosine. The active-site Proton acceptor is the Asp-229. Residue Ser-233 is modified to Phosphoserine. 2 positions are modified to phosphothreonine: Thr-264 and Thr-269. At Tyr-277 the chain carries Phosphotyrosine. The segment at 390-424 (GHWPLSPKSQGGKVSPKVRGDHRSGRKSAPGSLRS) is disordered.

This sequence belongs to the protein kinase superfamily. Ser/Thr protein kinase family. Interacts with the Xanthomonas campestris effector XopAC/AvrAC.

Its subcellular location is the cell membrane. The catalysed reaction is L-seryl-[protein] + ATP = O-phospho-L-seryl-[protein] + ADP + H(+). It carries out the reaction L-threonyl-[protein] + ATP = O-phospho-L-threonyl-[protein] + ADP + H(+). In terms of biological role, may be involved in plant defense signaling. The protein is Probable serine/threonine-protein kinase PBL15 of Arabidopsis thaliana (Mouse-ear cress).